We begin with the raw amino-acid sequence, 440 residues long: ATP-dependent protease ATPase subunit HslU (440 aa).

Residues I18, 60–65 (GVGKTE), D253, E318, and R390 contribute to the ATP site.

Belongs to the ClpX chaperone family. HslU subfamily. In terms of assembly, a double ring-shaped homohexamer of HslV is capped on each side by a ring-shaped HslU homohexamer. The assembly of the HslU/HslV complex is dependent on binding of ATP.

The protein localises to the cytoplasm. Its function is as follows. ATPase subunit of a proteasome-like degradation complex; this subunit has chaperone activity. The binding of ATP and its subsequent hydrolysis by HslU are essential for unfolding of protein substrates subsequently hydrolyzed by HslV. HslU recognizes the N-terminal part of its protein substrates and unfolds these before they are guided to HslV for hydrolysis. The protein is ATP-dependent protease ATPase subunit HslU of Shewanella oneidensis (strain ATCC 700550 / JCM 31522 / CIP 106686 / LMG 19005 / NCIMB 14063 / MR-1).